A 269-amino-acid chain; its full sequence is Major capsid protein P2 (269 aa).

Homotrimer.

Its subcellular location is the virion. Functionally, major capsid protein. The sequence is that of Major capsid protein P2 (II) from Pseudoalteromonas phage PM2 (Bacteriophage PM2).